A 3933-amino-acid chain; its full sequence is MIKKSEESKRLLRKKLNNDITNILLLFEKVQEWADLSNILQKLYLTIEKYELFVNVSSKFLLFRRLSQCLNPLLPSGVHSKALIIYSSIFKKVEMDFFINNIHILCSGIFEFMLHCTINLKTIYFKNIKSILRLKENVYIFAYALLLSLFNVVDSDNNILLYIYSINNYIGENIFFNNIWLLLLRHPEIRTNILNFLEASFSPQIYLLSKERIKMLLPYKDHLVLSSIIYCLNDKNILNQRITLSLLINNFPLSHVPNKKNKKKIIDKSKSNDYHMDKPPYSPFNASTSSVILNNSNMDSMNDNRINENNINNNDNKRHNIQINNDYLFGDMMNKQNDTTIMQSNKMLNRHNIIGEQHLDDDLLSSIHDDNSEKKNNNNFMLLNENNKISTSKEHLDNMHNRGIKSHEDIMGSNQNKMNLSNDEKDHWGGNLNSKVGNYDDKNICGKKHLGLKSEYGQVSYDESLERRLNNNNNNNNNNNNNNNNNGDNLKYQGSVDYDEHDISMSTENDKYGKMGNENMNDVFISKGKMMRKGYEDDGHHHININDDDNLNYDDNEDDEYGNYHNNNYNDRNYFNEYDEDDQYENNNNNNHSNNNNMLHLGSVDRNRRKQLKKKINNIGQTNNYDDDEEEEDEEEEDNNNNTSYNNNNNNSSSSSSIFFSDTSKKLIARNVIFLLKKSDIGLNRRIFKYLYLYESNDEKNFKDKEINFENYKIYCETIIDILENKSDDNYNSIAEVIYILFKNKDYININRYIMEQVFLYLLNFCYKNREDTSIKSFLKNMLNLNLISYENILNIFLYTFYYLRRNDDLFVHYTNIYIKKYINLLNIMTFFVEFIKHMNKYLYIQFLFHFNLATLKLMNFLNLKIINIIKKYSHVKDLNEKYFIDSNDVVSGRHSTLYYFYFFVTHYNNYYLNKCLSIIVKDILPQNPSNRKMGNYQSHYYANNKHMLYMNTHEIHSARMEEYSNKIQKVGFKNEIVDRKNKYDNNEYSESEIKMRAVDNSMNYIKRKVKKKNMESKDSSNSMSNMEINTNSTMANRLNHMQHIQHDGISSMEHMNNKINDNNNNNNVNYFFDGNNSNNNNNNNILENNNKLYFDKGYNGNYSKIENDQSFHNILMKYKFKLKQNLIDAIIKNHELYFFTNNCEYIIFLFYNYHLLIEKEKLNKSCFYFLKNILNNCTCENKNKFYFWCFLFLHIIRINFNKSLLKNYKIKEAGDDTDDDDDDDDDDDDEEEDDDDEDDDDEDDEEEDDEEDLGVDGLKNMSSKKGKKKKKKSVHKNKLMNKKYGRGGSSKYYYYLTSDKEIMLHGGMMGGVNYSDMEHDEDNLDVDDEDEQMFSYNKNKIRNKHFGELNKMKYMNEDITNNNNNINNNSNNNNNNKNNINNNNNNNNNNNNNNNNLNNLNNFNNNVSINNGNNKYRNYFRSTEEELLFNKRFVEFLLPYSNNIAKYIFQYIKILKKNKKFIKLFFDINYLYFFCDNMFCLKILKKSLKCKDNHELTINVKVILEYIINSKTNEYHIIHSNFYNLTHDVFKLYNRRNNLINYYLIKYIMRNKENLSYIFDNIIISMFDLITEIENLYEKIEMMKKDLSYSMMNNNDHVYDPNGMIEAADQRKSHYVSLKDNMNNMNNMNNVNNMNNVNNMNNVNNVNNVNNVNYHNNTINNNNNNNNFSNHTSYVNEKTQENNYHNLMNTYEKYLKKLKCKFDYISYFFLNMENFMLWLYKHKISKKIYHSRNKMTLTNYEKNMAIIICYICTEGNINSFFFRNYLDVFFILFLKIIYLNENISELNNSANNIIQKEKNNLKHNSLLEFKRDTLSMLNNIFNINHNKKFEYMKILNLYYRQIIHHLLFLYYYFTVKKYYVLQLQLVHFIRYILPLYEKNIDKKFLTNESTEKDKVFKRMKYNNYEEFISASKYHFEIINRNNYNMKNDVFIFSILRKSMTIIFNLNEQVLYKEVLKTIIDLIENIIDEKEVKNYYLTVFFLDLLYIIKMEDQKKKKNIFFIMKFCQFLIEIFKLIYRDEMKNELKCDKKFQDDNITIDIIENALSNNKMSTASFCTIFSIKTDDKFVNVQHKNISNLFSVIFNLYAFLKKKIKLYYKHNKHLINNDDKNNVVNNNSYIYYDNNSNVYNNNNTNIYNNNNNNENNAFNNNMPNNSNIMNNMNNMNDIYHISQHTNNNIRYNDVSSCGARGHNINSNENVNQNDLNNNSNYNYNRGMNNMNGDINNINGDINNMNGDINNMNGDINNMNGDINNMNGDINNMNGGNFKNPNSYNNNNNMNSYYSHNSSDYHKDNDNMRNNVNSSNSNFHNNNQDVQIMNRKNDSDGNVGNFDNNSTYSYMNNVNNDISMRLTNINNNNNININNNNNNNNNLFAYNKNNPNALVNNMNNQDKPDQHNNSHQYMYKENDMNQFGNSNYNNMDNTNNKFYNNYNYGKNVEGHTIYDNNNNNNNNSNNGAVNINSVQGENNVMSRNNILFNHNVNNNEYYFSQKNEDNMASMNNNHHNNYHNNNNNHHNNNINNHHNNNINNHHNMNRNNNIYSEDSKTNECYSMREKMGDVNVAYNSNFYDDKNNYTHMKNDLIKNEQKNNYGFCNNHENTFIYNCKNRMNRNNYAFNMGSKKNKKIMLLKVCLSNIISINKLLYFITRPEFLFIDNLYSIFKDYIKNRNEYNKERLSKSDYYYEQREKLYKEHRRKMNRQNIRTDSSNNNNNNNINSNNNNNNNNNNNNNNNNNNNNNIYNNNNYYYSSSINKVSFDDDEKIEVESFLDHNGVVGSNKKIKREKIREYFKKEKNLLKKLNFMTKFSKNTIKKSMIVMNNSDECIEKKKLSFSLTLLTEFDDVILIKIIDDLLNYYEKYKSKINLNEFMYFLFNIYLNICTLTKRIINHFIDFIFSFIKKITQTSQNIMSSLWFLYILFIIENNHIYVFNDKLQKKIIVEQISILIQISLYSYYSKNVKNNYNIQTPLPNFVQPFNIYYIIQNYFINNNYFHIKKNNKNIRYFYIKNLKLIEKNFNINDYSEIAAINALSFLLMCFYHTVNYNGTNKSYICESSVNIFYEHFSKYISLIYNNSLQNIFYRYVFLLIMNLLIDYNANSKYYIKKITFDLYSYITNVDIRCIKALSTLFKKLNETNIDELLLVPTSSIFSLKFNIINSRINYINKLSLIILAGNRNFYLCHLPKIAENISEYIKFCNDLKLYREILILICIIIIKNDENEIYIIIPTFISLILQIYHVERIKYKMAVENINNIDKDDDNYIYDFNSYNNKDVLSLLKTLLIIINILIKRNVSFINFYSWIFFKDISIKKNRLEQQNREPGNLMIYPGHKTLVYNNKKKKQKNVVRYVSSSSDKDESSVYNISVDEENSLKTQGRFFDDTYYKRKDNSGYTNKMKNFNSLTYEDKSSLMTGNQTSSTKDVGGMVNNAIRQNIEQNNMIHPNQINNNNNNNNNNNNVYNFNDFTNSMNQPNVINNNKKKKAFTTDDYFVKYDENQKVTKQTKLNHHNEDNLNDTITVYLNSNQEDYLYESKNNFTSIRSEHISSMVDIKKGSILNSNNILTNDNNTNNNIHSNIHNGSSSNNNNNNNSVCTGIKLDESKFVPFLDIIERIYSPNNILNKKYVSSEELKNEKSTRTYNSSLQEGSDYDEEEDEEYDVDADVDVDVDVDDDDDDDVDIVDVDVDDVVVDYNYYDNENNSVKIIDVDERKRSVHFYPQHLDGNTLKKNLYYNDNYLREYILSTKNELSGYSSFENNLSSSSVNSIKSNFSNTFSKDNINKNIITDDTSDDNDMMNSNNNMNSMMVPYNMHMTDDEFQENINNNNNNNNNNNDNMYLSSDDGYPSQSNHKWIHFNSLLNYDIHELSKKKKKKKKKISIHSCKNLPLVLVYLSKKIKLNFYKYSMKKPKEETIILLKELNSVENDINDLFLEVDLNEVYYDFLIR.

The next 4 membrane-spanning stretches (helical) occupy residues 70-90 (LNPLLPSGVHSKALIIYSSIF), 98-118 (FINNIHILCSGIFEFMLHCTI), 140-160 (IFAYALLLSLFNVVDSDNNIL), and 163-183 (IYSINNYIGENIFFNNIWLLL). 3 disordered regions span residues 468–494 (RLNNNNNNNNNNNNNNNNNGDNLKYQG), 543–600 (ININ…NMLH), and 614–656 (KKIN…SSSS). Residues 470–486 (NNNNNNNNNNNNNNNNN) are compositionally biased toward low complexity. Acidic residues predominate over residues 546–561 (NDDDNLNYDDNEDDEY). Composition is skewed to low complexity over residues 563–576 (NYHNNNYNDRNYFN) and 585–597 (ENNNNNNHSNNNN). The stretch at 620-651 (GQTNNYDDDEEEEDEEEEDNNNNTSYNNNNNN) forms a coiled coil. Residues 625–639 (YDDDEEEEDEEEEDN) are compositionally biased toward acidic residues. Residues 640 to 656 (NNNTSYNNNNNNSSSSS) are compositionally biased toward low complexity. 3 helical membrane passes run 782-802 (MLNLNLISYENILNIFLYTFY), 842-862 (YLYIQFLFHFNLATLKLMNFL), and 1186-1206 (FYFWCFLFLHIIRINFNKSLL). Residues 1216–1255 (DDTDDDDDDDDDDDDEEEDDDDEDDDDEDDEEEDDEEDLG) show a composition bias toward acidic residues. 2 disordered regions span residues 1216-1284 (DDTD…MNKK) and 1361-1405 (TNNN…NNFN). Residues 1263–1284 (SSKKGKKKKKKSVHKNKLMNKK) show a composition bias toward basic residues. Residues 1349–1403 (ELNKMKYMNEDITNNNNNINNNSNNNNNNKNNINNNNNNNNNNNNNNNNLNNLNN) are a coiled coil. The segment covering 1362–1405 (NNNNNINNNSNNNNNNKNNINNNNNNNNNNNNNNNNLNNLNNFN) has biased composition (low complexity). The next 2 membrane-spanning stretches (helical) occupy residues 1462 to 1482 (FIKLFFDINYLYFFCDNMFCL) and 1997 to 2017 (KNIFFIMKFCQFLIEIFKLIY). Residues 2691 to 2739 (HRRKMNRQNIRTDSSNNNNNNNINSNNNNNNNNNNNNNNNNNNNNNIYN) are disordered. The span at 2704–2739 (SSNNNNNNNINSNNNNNNNNNNNNNNNNNNNNNIYN) shows a compositional bias: low complexity. The next 5 membrane-spanning stretches (helical) occupy residues 2860–2880 (INLNEFMYFLFNIYLNICTLT), 2905–2925 (IMSSLWFLYILFIIENNHIYV), 3017–3037 (YSEIAAINALSFLLMCFYHTV), 3200–3220 (ILILICIIIIKNDENEIYIII), and 3276–3296 (IIINILIKRNVSFINFYSWIF). A disordered region spans residues 3620 to 3646 (LKNEKSTRTYNSSLQEGSDYDEEEDEE). Residues 3637-3646 (SDYDEEEDEE) show a composition bias toward acidic residues. Residues 3897-3925 (KEETIILLKELNSVENDINDLFLEVDLNE) are a coiled coil.

It belongs to the DOP1 family.

It is found in the membrane. Its function is as follows. May be involved in protein traffic between late Golgi and early endosomes. This Plasmodium falciparum (isolate 3D7) protein is Protein DOP1 homolog PFC0245c.